The chain runs to 810 residues: AMP deaminase (810 aa).

A compositionally biased stretch (polar residues) spans 1–10; it reads MDNQATQRLN. Disordered stretches follow at residues 1–61 and 114–137; these read MDNQ…SHES and AAMN…PRTL. Ser-19, Ser-58, and Ser-61 each carry phosphoserine. Residues 125-137 show a composition bias toward polar residues; the sequence is HASQNSGGKPRTL. Ser-138 carries the phosphoserine modification. His-362 and His-364 together coordinate Zn(2+). Substrate is bound by residues His-364 and 433-438; that span reads KFNLKY. His-630 is a binding site for Zn(2+). Residue Glu-633 coordinates substrate. His-652 (proton acceptor) is an active-site residue. Asp-707 contacts Zn(2+). A substrate-binding site is contributed by 708-711; it reads DPLQ.

This sequence belongs to the metallo-dependent hydrolases superfamily. Adenosine and AMP deaminases family. Homotetramer. Zn(2+) is required as a cofactor.

The catalysed reaction is AMP + H2O + H(+) = IMP + NH4(+). The protein operates within purine metabolism; IMP biosynthesis via salvage pathway; IMP from AMP: step 1/1. AMP deaminase plays a critical role in energy metabolism. The chain is AMP deaminase (AMD1) from Saccharomyces cerevisiae (strain ATCC 204508 / S288c) (Baker's yeast).